Here is a 90-residue protein sequence, read N- to C-terminus: Hypnin-A3 (90 aa).

Its function is as follows. Lectin specific for core(alpha 1-6)fucosylated N-glycans. Inhibits platelet aggregation. The sequence is that of Hypnin-A3 from Hypnea japonica (Japanese red alga).